We begin with the raw amino-acid sequence, 263 residues long: Aminoglycoside (3'') (9) adenylyltransferase (263 aa).

It carries out the reaction streptomycin + ATP = 3''-O-adenylylstreptomycin + diphosphate. It catalyses the reaction spectinomycin + ATP = 9-O-adenylylspectinomycin + diphosphate. Its function is as follows. Mediates bacterial resistance to the antibiotics streptomycin and spectinomycin. This chain is Aminoglycoside (3'') (9) adenylyltransferase, found in Escherichia coli.